The sequence spans 358 residues: tRNA-specific 2-thiouridylase MnmA (358 aa).

ATP contacts are provided by residues 6–13 (ALSGGVDS) and Met-32. The Nucleophile role is filled by Cys-103. Cysteines 103 and 201 form a disulfide. Gly-127 contributes to the ATP binding site. The tract at residues 151 to 153 (KDQ) is interaction with tRNA. Residue Cys-201 is the Cysteine persulfide intermediate of the active site.

The protein belongs to the MnmA/TRMU family.

The protein localises to the cytoplasm. The enzyme catalyses S-sulfanyl-L-cysteinyl-[protein] + uridine(34) in tRNA + AH2 + ATP = 2-thiouridine(34) in tRNA + L-cysteinyl-[protein] + A + AMP + diphosphate + H(+). Its function is as follows. Catalyzes the 2-thiolation of uridine at the wobble position (U34) of tRNA, leading to the formation of s(2)U34. This is tRNA-specific 2-thiouridylase MnmA from Thermotoga neapolitana (strain ATCC 49049 / DSM 4359 / NBRC 107923 / NS-E).